A 347-amino-acid polypeptide reads, in one-letter code: Lipopolysaccharide core heptosyltransferase OpsX (347 aa).

The protein belongs to the glycosyltransferase 9 family.

It participates in bacterial outer membrane biogenesis; LPS core biosynthesis. Functionally, catalyzes heptose transfer to the lipopolysaccharide core. It transfers the first L-glycero-D-manno-heptose to the phosphorylated 3-deoxy-alpha-D-manno-octulosonic acid (Kdo-P) of the inner core. The polypeptide is Lipopolysaccharide core heptosyltransferase OpsX (Haemophilus influenzae (strain ATCC 51907 / DSM 11121 / KW20 / Rd)).